The following is a 153-amino-acid chain: 6,7-dimethyl-8-ribityllumazine synthase (153 aa).

5-amino-6-(D-ribitylamino)uracil contacts are provided by residues Phe21, 55 to 57 (AFE), and 79 to 81 (TVI). 84-85 (AT) serves as a coordination point for (2S)-2-hydroxy-3-oxobutyl phosphate. The active-site Proton donor is the His87. Phe112 provides a ligand contact to 5-amino-6-(D-ribitylamino)uracil. Position 126 (Arg126) interacts with (2S)-2-hydroxy-3-oxobutyl phosphate.

The protein belongs to the DMRL synthase family. In terms of assembly, forms an icosahedral capsid composed of 60 subunits, arranged as a dodecamer of pentamers.

The catalysed reaction is (2S)-2-hydroxy-3-oxobutyl phosphate + 5-amino-6-(D-ribitylamino)uracil = 6,7-dimethyl-8-(1-D-ribityl)lumazine + phosphate + 2 H2O + H(+). It functions in the pathway cofactor biosynthesis; riboflavin biosynthesis; riboflavin from 2-hydroxy-3-oxobutyl phosphate and 5-amino-6-(D-ribitylamino)uracil: step 1/2. In terms of biological role, catalyzes the formation of 6,7-dimethyl-8-ribityllumazine by condensation of 5-amino-6-(D-ribitylamino)uracil with 3,4-dihydroxy-2-butanone 4-phosphate. This is the penultimate step in the biosynthesis of riboflavin. In Bacillus cereus (strain ATCC 10987 / NRS 248), this protein is 6,7-dimethyl-8-ribityllumazine synthase.